A 43-amino-acid chain; its full sequence is Holotricin-1 (43 aa).

3 cysteine pairs are disulfide-bonded: C3–C34, C20–C39, and C24–C41.

It belongs to the invertebrate defensin family. Type 1 subfamily. In terms of tissue distribution, hemolymph.

It is found in the secreted. Functionally, shows potent antibacterial activity against Gram-positive bacteria. The sequence is that of Holotricin-1 from Holotrichia diomphalia (Korean black chafer).